We begin with the raw amino-acid sequence, 320 residues long: Cytochrome f (320 aa).

Positions 1 to 36 (MKLNSLINLIQKSIYSCTLLLTILNIICIAPNSSNA) are cleaved as a signal peptide. Phe-37, Cys-57, Cys-60, and His-61 together coordinate heme. A helical transmembrane segment spans residues 286-305 (IKGMIAFFFVSVLAQIFFVL).

It belongs to the cytochrome f family. As to quaternary structure, the 4 large subunits of the cytochrome b6-f complex are cytochrome b6, subunit IV (17 kDa polypeptide, petD), cytochrome f and the Rieske protein, while the 4 small subunits are PetG, PetL, PetM and PetN. The complex functions as a dimer. Heme is required as a cofactor.

Its subcellular location is the plastid. The protein localises to the chloroplast thylakoid membrane. Functionally, component of the cytochrome b6-f complex, which mediates electron transfer between photosystem II (PSII) and photosystem I (PSI), cyclic electron flow around PSI, and state transitions. The sequence is that of Cytochrome f (petA) from Porphyra purpurea (Red seaweed).